Reading from the N-terminus, the 417-residue chain is Aminoacyltransferase FemA (417 aa).

This sequence belongs to the FemABX family.

Its subcellular location is the cytoplasm. It catalyses the reaction beta-D-GlcNAc-(1-&gt;4)-Mur2Ac(oyl-L-Ala-D-isoglutaminyl-L-Lys-(N(6)-Gly)-D-Ala-D-Ala)-di-trans,octa-cis-undecaprenyl diphosphate + 2 glycyl-tRNA(Gly) = MurNAc-L-Ala-D-isoglutaminyl-L-Lys-(N(6)-tri-Gly)-D-Ala-D-Ala-diphospho-di-trans,octa-cis-undecaprenyl-GlcNAc + 2 tRNA(Gly) + 2 H(+). Catalyzes the incorporation of amino acid(s) into the interchain peptide bridge of peptidoglycan, using aminoacyl-tRNA as amino acid donor. The polypeptide is Aminoacyltransferase FemA (femA) (Staphylococcus epidermidis (strain ATCC 35984 / DSM 28319 / BCRC 17069 / CCUG 31568 / BM 3577 / RP62A)).